The primary structure comprises 490 residues: Bifunctional protein HldE (490 aa).

A ribokinase region spans residues 1–330 (MERKEIESLF…AEIGHAHPDS (330 aa)). Position 205-208 (205-208 (NRKE)) interacts with ATP. The active site involves Asp-275. Residues 356 to 490 (FTNGCFDLLH…EKIRTGSIKE (135 aa)) are cytidylyltransferase.

This sequence in the N-terminal section; belongs to the carbohydrate kinase PfkB family. It in the C-terminal section; belongs to the cytidylyltransferase family. In terms of assembly, homodimer.

The catalysed reaction is D-glycero-beta-D-manno-heptose 7-phosphate + ATP = D-glycero-beta-D-manno-heptose 1,7-bisphosphate + ADP + H(+). It catalyses the reaction D-glycero-beta-D-manno-heptose 1-phosphate + ATP + H(+) = ADP-D-glycero-beta-D-manno-heptose + diphosphate. It participates in nucleotide-sugar biosynthesis; ADP-L-glycero-beta-D-manno-heptose biosynthesis; ADP-L-glycero-beta-D-manno-heptose from D-glycero-beta-D-manno-heptose 7-phosphate: step 1/4. It functions in the pathway nucleotide-sugar biosynthesis; ADP-L-glycero-beta-D-manno-heptose biosynthesis; ADP-L-glycero-beta-D-manno-heptose from D-glycero-beta-D-manno-heptose 7-phosphate: step 3/4. Catalyzes the phosphorylation of D-glycero-D-manno-heptose 7-phosphate at the C-1 position to selectively form D-glycero-beta-D-manno-heptose-1,7-bisphosphate. In terms of biological role, catalyzes the ADP transfer from ATP to D-glycero-beta-D-manno-heptose 1-phosphate, yielding ADP-D-glycero-beta-D-manno-heptose. This Geotalea uraniireducens (strain Rf4) (Geobacter uraniireducens) protein is Bifunctional protein HldE.